A 311-amino-acid chain; its full sequence is Aspartate carbamoyltransferase catalytic subunit (311 aa).

Positions 55 and 56 each coordinate carbamoyl phosphate. K85 is a binding site for L-aspartate. Residues R106, H134, and Q137 each contribute to the carbamoyl phosphate site. Residues R167 and R228 each contribute to the L-aspartate site. Positions 266 and 267 each coordinate carbamoyl phosphate.

It belongs to the aspartate/ornithine carbamoyltransferase superfamily. ATCase family. Heterododecamer (2C3:3R2) of six catalytic PyrB chains organized as two trimers (C3), and six regulatory PyrI chains organized as three dimers (R2).

The enzyme catalyses carbamoyl phosphate + L-aspartate = N-carbamoyl-L-aspartate + phosphate + H(+). Its pathway is pyrimidine metabolism; UMP biosynthesis via de novo pathway; (S)-dihydroorotate from bicarbonate: step 2/3. Functionally, catalyzes the condensation of carbamoyl phosphate and aspartate to form carbamoyl aspartate and inorganic phosphate, the committed step in the de novo pyrimidine nucleotide biosynthesis pathway. In Psychromonas ingrahamii (strain DSM 17664 / CCUG 51855 / 37), this protein is Aspartate carbamoyltransferase catalytic subunit.